Reading from the N-terminus, the 335-residue chain is Holliday junction branch migration complex subunit RuvB (335 aa).

Residues 4-184 (ADRIISGQAK…FGIVQRLEFY (181 aa)) are large ATPase domain (RuvB-L). ATP contacts are provided by residues isoleucine 23, arginine 24, glycine 65, lysine 68, threonine 69, threonine 70, 131 to 133 (EDY), arginine 174, tyrosine 184, and arginine 221. Mg(2+) is bound at residue threonine 69. Residues 185-255 (SVEDLTSIVA…VAKQALSMLD (71 aa)) are small ATPAse domain (RuvB-S). The interval 258 to 335 (DAGFDYLDRK…RHFGLQKLSD (78 aa)) is head domain (RuvB-H). DNA contacts are provided by arginine 294, arginine 313, and arginine 318.

The protein belongs to the RuvB family. Homohexamer. Forms an RuvA(8)-RuvB(12)-Holliday junction (HJ) complex. HJ DNA is sandwiched between 2 RuvA tetramers; dsDNA enters through RuvA and exits via RuvB. An RuvB hexamer assembles on each DNA strand where it exits the tetramer. Each RuvB hexamer is contacted by two RuvA subunits (via domain III) on 2 adjacent RuvB subunits; this complex drives branch migration. In the full resolvosome a probable DNA-RuvA(4)-RuvB(12)-RuvC(2) complex forms which resolves the HJ.

Its subcellular location is the cytoplasm. The enzyme catalyses ATP + H2O = ADP + phosphate + H(+). Functionally, the RuvA-RuvB-RuvC complex processes Holliday junction (HJ) DNA during genetic recombination and DNA repair, while the RuvA-RuvB complex plays an important role in the rescue of blocked DNA replication forks via replication fork reversal (RFR). RuvA specifically binds to HJ cruciform DNA, conferring on it an open structure. The RuvB hexamer acts as an ATP-dependent pump, pulling dsDNA into and through the RuvAB complex. RuvB forms 2 homohexamers on either side of HJ DNA bound by 1 or 2 RuvA tetramers; 4 subunits per hexamer contact DNA at a time. Coordinated motions by a converter formed by DNA-disengaged RuvB subunits stimulates ATP hydrolysis and nucleotide exchange. Immobilization of the converter enables RuvB to convert the ATP-contained energy into a lever motion, pulling 2 nucleotides of DNA out of the RuvA tetramer per ATP hydrolyzed, thus driving DNA branch migration. The RuvB motors rotate together with the DNA substrate, which together with the progressing nucleotide cycle form the mechanistic basis for DNA recombination by continuous HJ branch migration. Branch migration allows RuvC to scan DNA until it finds its consensus sequence, where it cleaves and resolves cruciform DNA. The protein is Holliday junction branch migration complex subunit RuvB of Haemophilus influenzae (strain PittEE).